The primary structure comprises 341 residues: Anthranilate phosphoribosyltransferase (341 aa).

5-phospho-alpha-D-ribose 1-diphosphate is bound by residues Gly-82, 85–86 (GD), Thr-90, 92–95 (NIST), 110–118 (KHGNRAITS), and Thr-122. Gly-82 is a binding site for anthranilate. Ser-94 contributes to the Mg(2+) binding site. Asn-113 contacts anthranilate. Arg-168 is a binding site for anthranilate. Positions 226 and 227 each coordinate Mg(2+).

The protein belongs to the anthranilate phosphoribosyltransferase family. In terms of assembly, homodimer. Requires Mg(2+) as cofactor.

The catalysed reaction is N-(5-phospho-beta-D-ribosyl)anthranilate + diphosphate = 5-phospho-alpha-D-ribose 1-diphosphate + anthranilate. Its pathway is amino-acid biosynthesis; L-tryptophan biosynthesis; L-tryptophan from chorismate: step 2/5. Catalyzes the transfer of the phosphoribosyl group of 5-phosphorylribose-1-pyrophosphate (PRPP) to anthranilate to yield N-(5'-phosphoribosyl)-anthranilate (PRA). The polypeptide is Anthranilate phosphoribosyltransferase (Caulobacter vibrioides (strain ATCC 19089 / CIP 103742 / CB 15) (Caulobacter crescentus)).